The chain runs to 259 residues: ATP synthase subunit a (259 aa).

The propeptide at 1 to 7 is removed in mature form; that stretch reads MTNNYIN. 5 consecutive transmembrane segments (helical) span residues 36–56, 95–115, 125–145, 164–206, and 211–253; these read FSLYTLFVVLVISLTFILSIG, YVPLVYTLFTFILVANLIGMV, LIYIIGISVSLWIGLTILGLF, LVPV…NLVK, and INYF…SYLK.

As to quaternary structure, F-type ATP synthases have 2 components, the catalytic core F(1) and the membrane-embedded component F(0), linked together by a central stalk and a peripheral stalk. The central stalk, also called rotor shaft, is often seen as part of F(1). The peripheral stalk is seen as part of F(0). F(0) contains the membrane channel next to the rotor. F-type ATP synthases form dimers but each monomer functions independently in ATP generation. The dimer consists of 18 different polypeptides: ATP1 (subunit alpha, part of F(1), 3 molecules per monomer), ATP2 (subunit beta, part of F(1), 3 molecules per monomer), ATP3 (subunit gamma, part of the central stalk), ATP4 (subunit b, part of the peripheral stalk), ATP5/OSCP (subunit 5/OSCP, part of the peripheral stalk), ATP6 (subunit a, part of the peripheral stalk), ATP7 (subunit d, part of the peripheral stalk), ATP8 (subunit 8, part of the peripheral stalk), OLI1 (subunit c, part of the rotor, 10 molecules per monomer), ATP14 (subunit h, part of the peripheral stalk), ATP15 (subunit epsilon, part of the central stalk), ATP16 (subunit delta, part of the central stalk), ATP17 (subunit f, part of the peripheral stalk), ATP18 (subunit i/j, part of the peripheral stalk). Dimer-specific subunits are ATP19 (subunit k, at interface between monomers), ATP20 (subunit g, at interface between monomers), TIM11 (subunit e, at interface between monomers). Also contains subunit L.

Its subcellular location is the mitochondrion inner membrane. Functionally, mitochondrial membrane ATP synthase (F(1)F(0) ATP synthase or Complex V) produces ATP from ADP in the presence of a proton gradient across the membrane which is generated by electron transport complexes of the respiratory chain. F-type ATP synthases consist of two structural domains, F(1) - containing the extramembraneous catalytic core, and F(0) - containing the membrane proton channel, linked together by a central stalk and a peripheral stalk. During catalysis, ATP synthesis in the catalytic domain of F(1) is coupled via a rotary mechanism of the central stalk subunits to proton translocation. Key component of the proton channel; it may play a direct role in the translocation of protons across the membrane. The polypeptide is ATP synthase subunit a (Pichia angusta (Yeast)).